The chain runs to 339 residues: Annexin A2 (339 aa).

Residue Ser-2 is modified to N-acetylserine. Residues 2–24 (STVHEILCKLSLEGDHSTPPSAY) are S100A10-binding site. Position 24 is a phosphotyrosine; by SRC (Tyr-24). Position 26 is a phosphoserine; by PKC (Ser-26). 2 Annexin repeats span residues 33–104 (FDAE…GLLK) and 105–176 (TPAQ…ALAK). Lys-49 carries the N6-acetyllysine; alternate modification. Lys-49 is covalently cross-linked (Glycyl lysine isopeptide (Lys-Gly) (interchain with G-Cter in SUMO1); alternate). Lys-49 participates in a covalent cross-link: Glycyl lysine isopeptide (Lys-Gly) (interchain with G-Cter in SUMO2); alternate. N6-acetyllysine is present on Lys-152. Ser-184 bears the Phosphoserine mark. Annexin repeat units lie at residues 189 to 261 (ELID…NLVQ) and 265 to 336 (NKPL…YLCG). Residue Tyr-199 is modified to Phosphotyrosine. The residue at position 227 (Lys-227) is an N6-acetyllysine.

This sequence belongs to the annexin family. As to quaternary structure, heterotetramer containing 2 light chains of S100A10/p11 and 2 heavy chains of ANXA2/p36. Interacts with ATP1B1. Interacts with DYSF. Interacts with COCH. Interacts (via repeat Annexin 1) with PCSK9 (via the C-terminal domain); the interaction inhibits the degradation of LDLR. Interacts with CEACAM1 (via the cytoplasmic domain); this interaction is regulated by phosphorylation of CEACAM1. Interacts with APPL2 and APPL1; targets APPL2 to endosomes and acting in parallel to RAB5A. Interacts with S100A4. May interact with UBAP2. In terms of processing, ISGylated. Expressed strongly in velvet antler reserve mesenchyme.

It localises to the secreted. It is found in the extracellular space. Its subcellular location is the extracellular matrix. The protein resides in the basement membrane. In terms of biological role, calcium-regulated membrane-binding protein whose affinity for calcium is greatly enhanced by anionic phospholipids. It binds two calcium ions with high affinity. May be involved in heat-stress response. Inhibits PCSK9-enhanced LDLR degradation, probably reduces PCSK9 protein levels via a translational mechanism but also competes with LDLR for binding with PCSK9. Binds to endosomes damaged by phagocytosis of particulate wear debris and participates in endosomal membrane stabilization, thereby limiting NLRP3 inflammasome activation. Required for endothelial cell surface plasmin generation and may support fibrinolytic surveillance and neoangiogenesis. The sequence is that of Annexin A2 (ANXA2) from Cervus elaphus (Red deer).